Reading from the N-terminus, the 3623-residue chain is Cubilin (3623 aa).

Positions 1 to 20 are cleaved as a signal peptide; it reads MSSQFLWGFVTLLMIAELDG. Positions 21-32 are cleaved as a propeptide — removed in mature form; that stretch reads KTGKPEQRGQKR. The interaction with AMN stretch occupies residues 39-46; it reads PRMTTEEG. N-linked (GlcNAc...) asparagine glycosylation occurs at Asn-95. One can recognise an EGF-like 1 domain in the interval 129–165; the sequence is ERKVCSSNPCLNGGTCVNLHDSFVCICPSQWKGLFCS. Cystine bridges form between Cys-133/Cys-144, Cys-138/Cys-153, Cys-155/Cys-164, Cys-171/Cys-187, Cys-181/Cys-196, Cys-198/Cys-207, Cys-264/Cys-277, Cys-271/Cys-286, and Cys-289/Cys-300. The EGF-like 2; calcium-binding domain occupies 167 to 208; that stretch reads DVNECVVYSGTPFGCQSGSTCVNTVGSFRCDCTPDTYGPQCA. An EGF-like 3; calcium-binding domain is found at 260 to 301; it reads DKDECSLQPSPCSEHAQCFNTQGSFYCGACPKGWQGNGYECQ. Residues 302–345 enclose the EGF-like 4; calcium-binding domain; the sequence is DINECEINNGGCSQAPLVPCLNTPGSFSCGNCPAGFSGDGRVCT. 2 EGF-like domains span residues 346–385 and 395–430; these read PVDI…YTGN and LSNI…QNCT. Intrachain disulfides connect Cys-350–Cys-363, Cys-357–Cys-376, Cys-399–Cys-409, Cys-404–Cys-418, Cys-420–Cys-429, Cys-436–Cys-447, Cys-441–Cys-456, Cys-458–Cys-467, Cys-474–Cys-500, Cys-527–Cys-549, Cys-590–Cys-616, Cys-643–Cys-665, and Cys-708–Cys-734. Asn-428 carries an N-linked (GlcNAc...) asparagine glycan. Positions 432 to 468 constitute an EGF-like 7; calcium-binding domain; it reads NINDCSSNPCLNGGTCIDGINGFTCDCTSSWTGYYCQ. 27 CUB domains span residues 474 to 586, 590 to 702, 708 to 816, 817 to 928, 932 to 1042, 1048 to 1161, 1165 to 1277, 1278 to 1389, 1391 to 1506, 1510 to 1619, 1620 to 1734, 1738 to 1850, 1852 to 1963, 1978 to 2091, 2092 to 2213, 2217 to 2334, 2336 to 2448, 2452 to 2565, 2570 to 2687, 2689 to 2801, 2805 to 2919, 2920 to 3035, 3037 to 3150, 3157 to 3274, 3278 to 3393, 3395 to 3507, and 3511 to 3623; these read CGGI…WEAK, CGGI…YLTT, CGGN…YQVA, CGGM…FSSD, CGEV…YEAI, CLYD…WDGS, CGGN…FRQR, CDNV…WFTH, CGGE…WRAV, CGGI…FREE, CGGR…YSAS, CGGS…FKNI, GNNN…WFAV, CGGF…FHKS, CGGY…YEAK, CGGT…YSIA, CGGT…FKSS, CGGD…YTST, CGGF…YSFT, CGGI…WTTN, CGGT…FISR, CGRT…YRAI, CGGI…FRET, CGGY…YTFV, CGGT…YQIA, CNRE…WTSS, and CGGT…MWSS. Asn-491 carries N-linked (GlcNAc...) asparagine glycosylation. Asn-711 and Asn-749 each carry an N-linked (GlcNAc...) asparagine glycan. Residues Cys-761 and Cys-779 are joined by a disulfide bond. The N-linked (GlcNAc...) asparagine glycan is linked to Asn-781. Residues Cys-817 and Cys-842 are joined by a disulfide bond. Asn-857 carries an N-linked (GlcNAc...) asparagine glycan. Intrachain disulfides connect Cys-869-Cys-891 and Cys-932-Cys-958. Asn-957 is a glycosylation site (N-linked (GlcNAc...) asparagine). Glu-980 is a Ca(2+) binding site. Asn-984 carries an N-linked (GlcNAc...) asparagine glycan. A disulfide bond links Cys-985 and Cys-1005. Positions 988, 1027, and 1030 each coordinate Ca(2+). Cys-1048 and Cys-1074 are disulfide-bonded. 3 residues coordinate Ca(2+): Glu-1096, Asp-1105, and Asp-1146. A disulfide bridge links Cys-1165 with Cys-1191. Asn-1168 carries an N-linked (GlcNAc...) asparagine glycan. Ca(2+)-binding residues include Glu-1213, Asp-1221, Asp-1262, Gly-1264, and Gln-1265. Cys-1218 and Cys-1240 are disulfide-bonded. An intrachain disulfide couples Cys-1278 to Cys-1306. Asn-1285, Asn-1307, and Asn-1319 each carry an N-linked (GlcNAc...) asparagine glycan. Glu-1328 is a Ca(2+) binding site. N-linked (GlcNAc...) asparagine glycosylation occurs at Asn-1332. Cys-1333 and Cys-1351 are disulfide-bonded. Ca(2+)-binding residues include Asp-1336, Asp-1373, and Ile-1375. 2 disulfide bridges follow: Cys-1391-Cys-1417 and Cys-1444-Cys-1466. Asn-1500 carries an N-linked (GlcNAc...) asparagine glycan. Cys-1510 and Cys-1536 form a disulfide bridge. 3 N-linked (GlcNAc...) asparagine glycosylation sites follow: Asn-1551, Asn-1646, and Asn-1671. A disulfide bridge connects residues Cys-1620 and Cys-1647. Disulfide bonds link Cys-1675–Cys-1697, Cys-1738–Cys-1764, and Cys-1791–Cys-1812. N-linked (GlcNAc...) asparagine glycosylation is found at Asn-1802 and Asn-1819. Intrachain disulfides connect Cys-1905/Cys-1927, Cys-1978/Cys-2006, and Cys-2032/Cys-2054. N-linked (GlcNAc...) asparagine glycosylation is found at Asn-2085 and Asn-2117. 2 cysteine pairs are disulfide-bonded: Cys-2092–Cys-2118 and Cys-2217–Cys-2247. Residue Asn-2274 is glycosylated (N-linked (GlcNAc...) asparagine). Disulfide bonds link Cys-2275/Cys-2297, Cys-2336/Cys-2363, Cys-2390/Cys-2411, Cys-2452/Cys-2478, and Cys-2505/Cys-2527. N-linked (GlcNAc...) asparagine glycosylation is present at Asn-2400. N-linked (GlcNAc...) asparagine glycosylation is found at Asn-2531, Asn-2581, and Asn-2610. A disulfide bridge connects residues Cys-2570 and Cys-2599. 7 disulfide bridges follow: Cys-2628/Cys-2649, Cys-2689/Cys-2715, Cys-2742/Cys-2764, Cys-2805/Cys-2831, Cys-2860/Cys-2883, Cys-2920/Cys-2946, and Cys-2977/Cys-2999. N-linked (GlcNAc...) asparagine glycosylation is found at Asn-2813, Asn-2875, Asn-2945, and Asn-2989. The residue at position 3008 (Thr-3008) is a Phosphothreonine. 2 disulfide bridges follow: Cys-3037-Cys-3064 and Cys-3091-Cys-3113. 4 N-linked (GlcNAc...) asparagine glycosylation sites follow: Asn-3042, Asn-3106, Asn-3125, and Asn-3165. 2 disulfide bridges follow: Cys-3157-Cys-3185 and Cys-3215-Cys-3237. 3 N-linked (GlcNAc...) asparagine glycosylation sites follow: Asn-3268, Asn-3283, and Asn-3290. Cystine bridges form between Cys-3278–Cys-3306 and Cys-3332–Cys-3354. Residues Asn-3357, Asn-3400, and Asn-3430 are each glycosylated (N-linked (GlcNAc...) asparagine). A disulfide bridge connects residues Cys-3395 and Cys-3421. 3 disulfides stabilise this stretch: Cys-3448-Cys-3470, Cys-3511-Cys-3537, and Cys-3564-Cys-3586. N-linked (GlcNAc...) asparagine glycosylation occurs at Asn-3533.

As to quaternary structure, interacts with AMN. Component of the cubam complex composed of one CUBN trimer and one AMN chain. The cubam complex can dimerize. Interacts with LRP2 in a dual-receptor complex in a calcium-dependent manner. Found in a complex with PID1/PCLI1, LRP1 and CUBNI. Interacts with LRP1 and PID1/PCLI1. Post-translationally, the precursor is cleaved by a trans-Golgi proteinase furin, removing a propeptide. In terms of processing, N-glycosylated. Expressed to intestinal, renal and yalk sac apical membranes. In kidney, expressed in the proximal tubule.

The protein resides in the cell membrane. Its subcellular location is the endosome membrane. The protein localises to the lysosome membrane. Its function is as follows. Endocytic receptor which plays a role in lipoprotein, vitamin and iron metabolism by facilitating their uptake. Acts together with LRP2 to mediate endocytosis of high-density lipoproteins, GC, hemoglobin, ALB, TF and SCGB1A1. Acts together with AMN to mediate endocytosis of the CBLIF-cobalamin complex. Binds to ALB, MB, Kappa and lambda-light chains, TF, hemoglobin, GC, SCGB1A1, APOA1, high density lipoprotein, and the CBLIF-cobalamin complex. Ligand binding requires calcium. Serves as important transporter in several absorptive epithelia, including intestine, renal proximal tubules and embryonic yolk sac. May play an important role in the development of the peri-implantation embryo through internalization of APOA1 and cholesterol. Binds to LGALS3 at the maternal-fetal interface. This is Cubilin (Cubn) from Rattus norvegicus (Rat).